Consider the following 346-residue polypeptide: Small ribosomal subunit biogenesis GTPase RsgA (346 aa).

The segment at 1 to 25 (MAKRKLTQNQTRRIQSNNAKTLHRH) is disordered. Over residues 7 to 20 (TQNQTRRIQSNNAK) the composition is skewed to polar residues. Residues 103–271 (ENEISRPDYY…LIDSPGIREF (169 aa)) enclose the CP-type G domain. GTP is bound by residues 159 to 162 (NKVD) and 213 to 221 (GQSGVGKSS). 4 residues coordinate Zn(2+): cysteine 295, cysteine 300, histidine 302, and cysteine 308.

The protein belongs to the TRAFAC class YlqF/YawG GTPase family. RsgA subfamily. In terms of assembly, monomer. Associates with 30S ribosomal subunit, binds 16S rRNA. Zn(2+) is required as a cofactor.

Its subcellular location is the cytoplasm. One of several proteins that assist in the late maturation steps of the functional core of the 30S ribosomal subunit. Helps release RbfA from mature subunits. May play a role in the assembly of ribosomal proteins into the subunit. Circularly permuted GTPase that catalyzes slow GTP hydrolysis, GTPase activity is stimulated by the 30S ribosomal subunit. This chain is Small ribosomal subunit biogenesis GTPase RsgA, found in Haemophilus influenzae (strain ATCC 51907 / DSM 11121 / KW20 / Rd).